The following is a 412-amino-acid chain: Solute carrier family 22 member 18 (412 aa).

The next 10 membrane-spanning stretches (helical) occupy residues 16–36 (GIIILTYVLAALELTCLFMQF), 51–71 (VSFGYLQTTFGVLQLLGGPVF), 117–137 (LPAALMHTLPAAQMVITDLTA), 148–168 (LGLCFGIGVIFGSLLGGTLST), 176–196 (AFLAFVVTLLGAVLSFTCIPV), 232–252 (FLVKVISGFPSGLFMVMFSII), 264–284 (AGYLMSFFGILQMMIQGLVIG), 294–314 (ALLRSSVLVFAVVGLGMALMS), 316–336 (VFHFCLLLPGLVFSLCALNIV), and 380–400 (GVSILGHVQLMVNLLVLLVLW).

This sequence belongs to the major facilitator (TC 2.A.1) superfamily. Organic cation transporter (TC 2.A.1.19) family.

The protein localises to the apical cell membrane. In terms of biological role, may act as a transporter of organic cations based on a proton efflux antiport mechanism. May play a role in the transport of chloroquine and quinidine-related compounds in kidney. Plays a role in the regulation of lipid metabolism. This Rattus norvegicus (Rat) protein is Solute carrier family 22 member 18 (Slc67a1).